The chain runs to 2238 residues: RNA-directed RNA polymerase L (2238 aa).

The interval 26–284 is endonuclease; sequence ITLVTCQNDA…THHSEHPVDC (259 aa). 3 residues coordinate Mn(2+): glutamate 51, aspartate 89, and glutamate 102. Lysine 115 is an active-site residue. Positions 1188–1387 constitute a RdRp catalytic domain; sequence TDMKMCVNLG…FISTKFNKFV (200 aa). Aspartate 1346 provides a ligand contact to Mg(2+).

It belongs to the Bunyavirales RNA polymerase family. Homomultimer; the oligomeric structure is essential for the polymerase activity. Interacts with nucleoprotein N. Interacts with protein Z; this interaction inhibits viral transcription and replication, Z partially blocks the product exit tunnel for the releasing nascent RNA product. Requires Mn(2+) as cofactor. It depends on Mg(2+) as a cofactor.

It localises to the virion. The protein resides in the host cytoplasm. It carries out the reaction RNA(n) + a ribonucleoside 5'-triphosphate = RNA(n+1) + diphosphate. Its function is as follows. RNA-dependent RNA polymerase, which is responsible for the replication and transcription of the viral RNA genome using antigenomic RNA as an intermediate. During transcription, synthesizes subgenomic RNAs and assures their capping by a cap-snatching mechanism, which involves the endonuclease activity cleaving the host capped pre-mRNAs. These short capped RNAs are then used as primers for viral transcription. The 3'-end of subgenomic mRNAs molecules are heterogeneous and not polyadenylated. The replicase function is to direct synthesis of antigenomic and genomic RNA which are encapsidated and non capped. As a consequence of the use of the same enzyme for both transcription and replication, these mechanisms need to be well coordinated. These processes may be regulated by proteins N and Z in a dose-dependent manner. Z protein inhibits the viral polymerase L und thus the viral transcription and RNA synthesis. This Calomys callosus (Large vesper mouse) protein is RNA-directed RNA polymerase L.